Consider the following 63-residue polypeptide: Large ribosomal subunit protein uL29 (63 aa).

It belongs to the universal ribosomal protein uL29 family.

This chain is Large ribosomal subunit protein uL29, found in Glaesserella parasuis serovar 5 (strain SH0165) (Haemophilus parasuis).